Reading from the N-terminus, the 351-residue chain is Photosystem II D2 protein (351 aa).

The chain crosses the membrane as a helical span at residues 39 to 59; it reads CAYLAVGGWLTGTTFVTSWYT. Histidine 116 serves as a coordination point for chlorophyll a. A helical transmembrane segment spans residues 123–139; sequence GFCLRQFEIARLVGLRP. Positions 128 and 141 each coordinate pheophytin a. Residues 151–164 traverse the membrane as a helical segment; the sequence is VFVSVFLMYPLGQA. Histidine 196 is a binding site for chlorophyll a. A helical membrane pass occupies residues 206–226; that stretch reads GALLCAIHGATVQNTLFEDGD. Residues histidine 213 and phenylalanine 260 each contribute to the a plastoquinone site. Histidine 213 lines the Fe cation pocket. A Fe cation-binding site is contributed by histidine 267. A helical transmembrane segment spans residues 277-293; sequence GLWTSAFGIVGLALNLR.

The protein belongs to the reaction center PufL/M/PsbA/D family. PSII is composed of 1 copy each of membrane proteins PsbA, PsbB, PsbC, PsbD, PsbE, PsbF, PsbH, PsbI, PsbJ, PsbK, PsbL, PsbM, PsbT, PsbX, PsbY, PsbZ, Psb30/Ycf12, at least 3 peripheral proteins of the oxygen-evolving complex and a large number of cofactors. It forms dimeric complexes. Requires The D1/D2 heterodimer binds P680, chlorophylls that are the primary electron donor of PSII, and subsequent electron acceptors. It shares a non-heme iron and each subunit binds pheophytin, quinone, additional chlorophylls, carotenoids and lipids. There is also a Cl(-1) ion associated with D1 and D2, which is required for oxygen evolution. The PSII complex binds additional chlorophylls, carotenoids and specific lipids. as cofactor.

It localises to the plastid. The protein localises to the chloroplast thylakoid membrane. The catalysed reaction is 2 a plastoquinone + 4 hnu + 2 H2O = 2 a plastoquinol + O2. Functionally, photosystem II (PSII) is a light-driven water:plastoquinone oxidoreductase that uses light energy to abstract electrons from H(2)O, generating O(2) and a proton gradient subsequently used for ATP formation. It consists of a core antenna complex that captures photons, and an electron transfer chain that converts photonic excitation into a charge separation. The D1/D2 (PsbA/PsbD) reaction center heterodimer binds P680, the primary electron donor of PSII as well as several subsequent electron acceptors. D2 is needed for assembly of a stable PSII complex. This chain is Photosystem II D2 protein, found in Porphyra purpurea (Red seaweed).